The primary structure comprises 644 residues: Chaperone protein DnaK (644 aa).

Position 199 is a phosphothreonine; by autocatalysis (threonine 199). The interval 605 to 644 (KKSSEGQAAQGQTQSQESTKPVEEGVVDAEFEEVKEEDKK) is disordered. Polar residues predominate over residues 609-623 (EGQAAQGQTQSQEST). Positions 629–644 (GVVDAEFEEVKEEDKK) are enriched in acidic residues.

This sequence belongs to the heat shock protein 70 family.

Acts as a chaperone. The sequence is that of Chaperone protein DnaK from Legionella pneumophila (strain Paris).